The chain runs to 224 residues: uncharacterized protein (224 aa).

This is an uncharacterized protein from Mycobacterium tuberculosis (strain CDC 1551 / Oshkosh).